The primary structure comprises 118 residues: DNA-binding protein Msp_0595 (118 aa).

Low complexity predominate over residues 15–44 (LKQQQLAAQQQQGASLEQMQQEEQARQQFE). Positions 15–45 (LKQQQLAAQQQQGASLEQMQQEEQARQQFEN) are disordered.

It belongs to the PDCD5 family.

The sequence is that of DNA-binding protein Msp_0595 from Methanosphaera stadtmanae (strain ATCC 43021 / DSM 3091 / JCM 11832 / MCB-3).